Consider the following 619-residue polypeptide: Keratin, type II cytoskeletal 1 (619 aa).

The segment at 1 to 180 (MSRHFSSRSG…DPEIQKVKTR (180 aa)) is head. R12 carries the post-translational modification Omega-N-methylarginine. S18 and S21 each carry phosphoserine. A disordered region spans residues 28-49 (QRRTTSSSVRHSGGGGGRFSGG). Residues 39 to 49 (SGGGGGRFSGG) show a composition bias toward gly residues. The residue at position 45 (R45) is an Omega-N-methylarginine. S68 carries the phosphoserine modification. A coiled-coil region spans residues 173–477 (EIQKVKTRER…ELMNTKLALD (305 aa)). The segment at 181–216 (EREQIKSLNNQFASFIDKVRFLEQQNQVLQTKWELL) is coil 1A. The region spanning 181-494 (EREQIKSLNN…TLLEGEESRM (314 aa)) is the IF rod domain. The interval 217 to 235 (QQVDTSTRTHSLEPYFENY) is linker 1. Residues 236–327 (ISNLRRRVDQ…TLYQAELSQM (92 aa)) are coil 1B. The residue at position 277 (K277) is an N6,N6-dimethyllysine. Positions 328-351 (QTQISETNVILSMDNNRSLDLDSI) are linker 12. A Phosphoserine modification is found at S345. Residues 352 to 490 (ISEVKAQYEE…ATYRTLLEGE (139 aa)) form a coil 2 region. A tail region spans residues 491–619 (ESRMSGECAP…VSTSYSRAVR (129 aa)). Residues R519 and R575 each carry the omega-N-methylarginine modification. The interval 559–619 (GGGGGGYGSS…VSTSYSRAVR (61 aa)) is disordered. Residues 573 to 595 (GHRGGSGGGSRSGGSSGGRGSSS) show a composition bias toward gly residues. Residues 596–606 (GGIKTSSGSSS) are compositionally biased toward low complexity. Over residues 607–619 (VKFVSTSYSRAVR) the composition is skewed to polar residues.

Belongs to the intermediate filament family. In terms of assembly, heterotetramer of two type I and two type II keratins. Heterodimer with KRT10. Two heterodimers of KRT1 and KRT10 form a heterotetramer. Forms a heterodimer with KRT14; the interaction is more abundant in the absence of KRT5. Interacts with ITGB1 in the presence of RACK1 and SRC, and with RACK1. Interacts with C1QBP; the association represents a cell surface kininogen receptor. Interacts with EPPK1; interaction is dependent of higher-order structure of intermediate filament. In terms of processing, undergoes deimination of some arginine residues (citrullination).

It is found in the cell membrane. The protein resides in the cytoplasm. Its function is as follows. May regulate the activity of kinases such as PKC and SRC via binding to integrin beta-1 (ITB1) and the receptor of activated protein C kinase 1 (RACK1). In complex with C1QBP is a high affinity receptor for kininogen-1/HMWK. The polypeptide is Keratin, type II cytoskeletal 1 (Canis lupus familiaris (Dog)).